Consider the following 1520-residue polypeptide: Putative lipoprotein AcfD homolog (1520 aa).

The signal sequence occupies residues 1 to 23 (MNKKFKYKKSLLAAILSATLLAG). Disordered regions lie at residues 22-107 (AGCD…GATC) and 226-247 (NAAT…TTPG). Cys-24 carries N-palmitoyl cysteine lipidation. Cys-24 carries S-diacylglycerol cysteine lipidation. Low complexity predominate over residues 31–42 (SSSDTPPVDSGT). Over residues 51-77 (DPTPNPEPTPEPTPDPEPTPEPIPDPE) the composition is skewed to pro residues. Residues 97–107 (GGSQRVTGATC) show a composition bias toward polar residues. A compositionally biased stretch (low complexity) spans 234–247 (STHTSPVVPVTTPG). Residues 1081–1381 (GNMQSTGLWA…MYAQLKEWAE (301 aa)) enclose the Peptidase M60 domain. Residues 1498–1520 (DLPKPEQGPETINQVTEHKMSAE) are disordered.

The protein to V.cholerae AcfD (VC_0845).

The protein localises to the cell inner membrane. In terms of biological role, involved in a type II secretion system (T2SS, formerly general secretion pathway, GSP) for the export of folded proteins across the outer membrane. This Escherichia coli (strain K12) protein is Putative lipoprotein AcfD homolog (yghJ).